The following is a 441-amino-acid chain: Protein translocase subunit SecY (441 aa).

Transmembrane regions (helical) follow at residues 24 to 44 (LFVLGALIVYRIGSFIPVPGI), 77 to 97 (ILALGIMPYISASIVIQLLAT), 123 to 143 (ATVVFATIQAVAISTGLPNML), 152 to 172 (FSFYFTSVVSLVTGTMFLMWL), 181 to 201 (IGNGISILVFGGIVAGLPSAI), 215 to 235 (PLVLLLIAAIVFAVTYFVVFV), 272 to 292 (VMPAIFASSIILFPATLTQWF), 313 to 333 (PLYLLVYAVAIIFFSFFYTAM), 373 to 393 (LIGGLYVTFVCLVPYIMTSAW), and 397 to 417 (FYFGGTSLLIVVVVIMDFIVQ).

Belongs to the SecY/SEC61-alpha family. In terms of assembly, component of the Sec protein translocase complex. Heterotrimer consisting of SecY, SecE and SecG subunits. The heterotrimers can form oligomers, although 1 heterotrimer is thought to be able to translocate proteins. Interacts with the ribosome. Interacts with SecDF, and other proteins may be involved. Interacts with SecA.

It localises to the cell inner membrane. In terms of biological role, the central subunit of the protein translocation channel SecYEG. Consists of two halves formed by TMs 1-5 and 6-10. These two domains form a lateral gate at the front which open onto the bilayer between TMs 2 and 7, and are clamped together by SecE at the back. The channel is closed by both a pore ring composed of hydrophobic SecY resides and a short helix (helix 2A) on the extracellular side of the membrane which forms a plug. The plug probably moves laterally to allow the channel to open. The ring and the pore may move independently. In Haemophilus influenzae (strain ATCC 51907 / DSM 11121 / KW20 / Rd), this protein is Protein translocase subunit SecY.